We begin with the raw amino-acid sequence, 382 residues long: Dodecanoyl-[acyl-carrier-protein] hydrolase, chloroplastic (382 aa).

The transit peptide at 1–83 directs the protein to the chloroplast; the sequence is MATTSLASAF…FSAAEKQWTN (83 aa). Catalysis depends on residues Asn-283, His-285, and Cys-320.

It belongs to the acyl-ACP thioesterase family. Forms homodimers. In terms of tissue distribution, expressed in developing cotyledons. Not detected in leaves.

It localises to the plastid. Its subcellular location is the chloroplast. It carries out the reaction dodecanoyl-[ACP] + H2O = dodecanoate + holo-[ACP] + H(+). Plays an essential role in chain termination during de novo fatty acid synthesis. High thioesterase activity for lauroyl-ACP versus other acyl-ACPs. The protein is Dodecanoyl-[acyl-carrier-protein] hydrolase, chloroplastic of Umbellularia californica (California bay laurel).